The following is a 494-amino-acid chain: MSTGTFVVSQPLNYRGGARVEPVDASGTEKAFEPATGREIATFKCSGEKEVNLAVENAKAAFKIWSKKSGLERCQVLLEAARIIKERRDEIAIMETINNGKSIFEARLDVDTSWQCLEYYAGLAASMAGEHIQLPGGSFGYTRREPLGVCLGIGAWNYPFQIACWKSAPALACGNAMIFKPSPFTPVSALLLAEIYTKAGAPNGLFNVVQGGAATGQFLCQHRDVAKVSFTGSVPTGMKIMEMAAKGIKPITLELGGKSPLIIFSDCNMKNAVKGALLANFLTQGQVCCNGTRVFVQKEIADAFTKEVVRQTQRIKIGDPLLEDTRMGPLINAPHLERVLGFVRSAKEQGATVLCGGEPYAPEDPKLKHGYYMTPCILTNCTDDMTCVKEEIFGPVMSILTFETEAEVLERANDTTFGLAAGVFTRDIQRAHRVAAELQAGTCYINNYNVSPVELPFGGYKKSGFGRENGRVTIEYYSQLKTVCVEMGDVESAF.

Serine 2 is modified (N-acetylserine). An N6-acetyllysine; alternate modification is found at lysine 30. Lysine 30 is subject to N6-succinyllysine; alternate. Position 59 is an N6-succinyllysine (lysine 59). Residues lysine 180 and 232–236 (GSVPT) each bind NAD(+). Residue glutamate 254 is the Proton acceptor of the active site. Cysteine 288 serves as the catalytic Nucleophile. The residue at position 298 (lysine 298) is an N6-acetyllysine. Glutamate 391 serves as a coordination point for NAD(+).

It belongs to the aldehyde dehydrogenase family. In terms of assembly, homotetramer. Detected in lever (at protein level).

The protein resides in the cytoplasm. It is found in the cytosol. The enzyme catalyses 4-(trimethylamino)butanal + NAD(+) + H2O = 4-(trimethylamino)butanoate + NADH + 2 H(+). It carries out the reaction an aldehyde + NAD(+) + H2O = a carboxylate + NADH + 2 H(+). The catalysed reaction is 4-aminobutanal + NAD(+) + H2O = 4-aminobutanoate + NADH + 2 H(+). It catalyses the reaction formaldehyde + NAD(+) + H2O = formate + NADH + 2 H(+). The enzyme catalyses acetaldehyde + NAD(+) + H2O = acetate + NADH + 2 H(+). It carries out the reaction imidazole-4-acetaldehyde + NAD(+) + H2O = imidazole-4-acetate + NADH + 2 H(+). The catalysed reaction is acrolein + NAD(+) + H2O = acrylate + NADH + 2 H(+). It catalyses the reaction (5-hydroxyindol-3-yl)acetaldehyde + NAD(+) + H2O = (5-hydroxyindol-3-yl)acetate + NADH + 2 H(+). The enzyme catalyses 3,4-dihydroxyphenylacetaldehyde + NAD(+) + H2O = 3,4-dihydroxyphenylacetate + NADH + 2 H(+). It carries out the reaction spermine monoaldehyde + NAD(+) + H2O = N-(2-carboxyethyl)spermidine + NADH + 2 H(+). The catalysed reaction is propanal + NAD(+) + H2O = propanoate + NADH + 2 H(+). It catalyses the reaction butanal + NAD(+) + H2O = butanoate + NADH + 2 H(+). The enzyme catalyses pentanal + NAD(+) + H2O = pentanoate + NADH + 2 H(+). It carries out the reaction hexanal + NAD(+) + H2O = hexanoate + NADH + 2 H(+). It participates in amine and polyamine biosynthesis; carnitine biosynthesis. Its function is as follows. Converts gamma-trimethylaminobutyraldehyde into gamma-butyrobetaine with high efficiency (in vitro). Can catalyze the irreversible oxidation of a broad range of aldehydes to the corresponding acids in an NAD-dependent reaction, but with low efficiency. Catalyzes the oxidation of aldehydes arising from biogenic amines and polyamines. In Rattus norvegicus (Rat), this protein is 4-trimethylaminobutyraldehyde dehydrogenase (Aldh9a1).